Reading from the N-terminus, the 64-residue chain is Alpha-conotoxin-like Ac1.1a (64 aa).

An N-terminal signal peptide occupies residues 1–21 (MGMRMMFTLFLLVVLTTTVVS). The propeptide occupies 22-47 (YPSDSASDGRDDEAKDERSDMYELKR). Disulfide bonds link C51–C56 and C52–C62. C62 bears the Cysteine amide mark.

This sequence belongs to the conotoxin A superfamily. Expressed by the venom duct.

It is found in the secreted. In terms of biological role, alpha-conotoxins act on postsynaptic membranes, they bind to the nicotinic acetylcholine receptors (nAChR) and thus inhibit them. The protein is Alpha-conotoxin-like Ac1.1a of Conus achatinus (Little frog cone).